Reading from the N-terminus, the 455-residue chain is MKKIEMYHHKKVLVLGLARSGVSAATIMHKLGAFVTVNDQKPFSENPEAQGLLEQGIKVICGSHPIELLDEGFELVIKNPGIPYNNPMIEKALKLKIPVITEVELAYQISEAPIVGITGTNGKTTTTTIIHHMLNTHKENSSLLAGNIGFPASAVAENATSDQYISMELSSFQLMGVETFKPHISVITNIYEAHLDYHTDRSEYVQAKWHIQKNQIADDFLVINWDQEELKNLTKQTKAQVIPFSTTQRLGQGSYVQNGNIMFNDEVIGERDNILLPGEHNLENVLASVAVAKTLGVTNEEIMHVLETFKGVEHRTQFVVEWQGRKFYNDSKATNILATQSALKGFKNPVVLLAGGLDRGNSFDELLPFFKNVKTLIVFGETADKIGRVGKIAGIEVHYVDNVEAAVPVAYRESAPGDIILLSPACASWDQYRTFEVRGNAYMDAIGELIEEVEK.

An ATP-binding site is contributed by 119 to 125 (GTNGKTT).

This sequence belongs to the MurCDEF family.

The protein localises to the cytoplasm. It catalyses the reaction UDP-N-acetyl-alpha-D-muramoyl-L-alanine + D-glutamate + ATP = UDP-N-acetyl-alpha-D-muramoyl-L-alanyl-D-glutamate + ADP + phosphate + H(+). It participates in cell wall biogenesis; peptidoglycan biosynthesis. Its function is as follows. Cell wall formation. Catalyzes the addition of glutamate to the nucleotide precursor UDP-N-acetylmuramoyl-L-alanine (UMA). The protein is UDP-N-acetylmuramoylalanine--D-glutamate ligase of Listeria monocytogenes serovar 1/2a (strain ATCC BAA-679 / EGD-e).